Consider the following 230-residue polypeptide: Thymine/uracil-DNA glycosylase (230 aa).

4 residues coordinate [4Fe-4S] cluster: cysteine 204, cysteine 211, cysteine 214, and cysteine 221.

This sequence belongs to the Nth/MutY family. [4Fe-4S] cluster is required as a cofactor.

The catalysed reaction is Hydrolyzes mismatched double-stranded DNA and polynucleotides, releasing free thymine.. Functionally, DNA glycosylase that excises thymine from T/G mismatches and uracil from U/G mismatches. Can also process T/GO and U/GO, but not A/G, T/C and U/C. Has weak AP lyase activity. The protein is Thymine/uracil-DNA glycosylase of Pyrobaculum aerophilum (strain ATCC 51768 / DSM 7523 / JCM 9630 / CIP 104966 / NBRC 100827 / IM2).